We begin with the raw amino-acid sequence, 153 residues long: Glucose-6-phosphate 1-dehydrogenase (153 aa).

Residues arginine 21 and lysine 120 each contribute to the NADP(+) site. Lysine 120 contacts D-glucose 6-phosphate.

This sequence belongs to the glucose-6-phosphate dehydrogenase family.

The protein resides in the cytoplasm. It localises to the cytosol. The catalysed reaction is D-glucose 6-phosphate + NADP(+) = 6-phospho-D-glucono-1,5-lactone + NADPH + H(+). It functions in the pathway carbohydrate degradation; pentose phosphate pathway; D-ribulose 5-phosphate from D-glucose 6-phosphate (oxidative stage): step 1/3. In terms of biological role, cytosolic glucose-6-phosphate dehydrogenase that catalyzes the first and rate-limiting step of the oxidative branch within the pentose phosphate pathway/shunt, an alternative route to glycolysis for the dissimilation of carbohydrates and a major source of reducing power and metabolic intermediates for fatty acid and nucleic acid biosynthetic processes. The chain is Glucose-6-phosphate 1-dehydrogenase (Zw) from Drosophila simulans (Fruit fly).